Consider the following 509-residue polypeptide: Photosystem II CP47 reaction center protein (509 aa).

The next 6 helical transmembrane spans lie at 21-36 (SVHL…WAGS), 101-115 (IVLS…VWHW), 140-156 (GIHL…FGAF), 203-218 (IAAG…FHLT), 237-252 (VLSS…AFVV), and 457-472 (VFAL…HGAR).

Belongs to the PsbB/PsbC family. PsbB subfamily. As to quaternary structure, PSII is composed of 1 copy each of membrane proteins PsbA, PsbB, PsbC, PsbD, PsbE, PsbF, PsbH, PsbI, PsbJ, PsbK, PsbL, PsbM, PsbT, PsbX, PsbY, PsbZ, Psb30/Ycf12, peripheral proteins PsbO, CyanoQ (PsbQ), PsbU, PsbV and a large number of cofactors. It forms dimeric complexes. The cofactor is Binds multiple chlorophylls. PSII binds additional chlorophylls, carotenoids and specific lipids..

Its subcellular location is the cellular thylakoid membrane. In terms of biological role, one of the components of the core complex of photosystem II (PSII). It binds chlorophyll and helps catalyze the primary light-induced photochemical processes of PSII. PSII is a light-driven water:plastoquinone oxidoreductase, using light energy to abstract electrons from H(2)O, generating O(2) and a proton gradient subsequently used for ATP formation. This is Photosystem II CP47 reaction center protein from Nostoc sp. (strain PCC 7120 / SAG 25.82 / UTEX 2576).